The following is a 333-amino-acid chain: Leucine carboxyl methyltransferase 1 (333 aa).

S-adenosyl-L-methionine is bound by residues Lys-42, Arg-82, Gly-107, Asp-131, 181 to 182 (DL), and Glu-208.

It belongs to the methyltransferase superfamily. LCMT family.

The catalysed reaction is [phosphatase 2A protein]-C-terminal L-leucine + S-adenosyl-L-methionine = [phosphatase 2A protein]-C-terminal L-leucine methyl ester + S-adenosyl-L-homocysteine. Its function is as follows. Methylates the carboxyl group of the C-terminal leucine residue of protein phosphatase 2A catalytic subunits to form alpha-leucine ester residues. This is Leucine carboxyl methyltransferase 1 from Caenorhabditis elegans.